Here is a 2079-residue protein sequence, read N- to C-terminus: Non-reducing polyketide synthase Dhc5 (2079 aa).

The tract at residues 9–246 is N-terminal acylcarrier protein transacylase domain (SAT); that stretch reads LLFGDVTDPW…DELNIHALQH (238 aa). The Ketosynthase family 3 (KS3) domain occupies 366 to 798; the sequence is NDGIAIVGMA…GGNACLLLED (433 aa). Active-site for beta-ketoacyl synthase activity residues include Cys543, His678, and His717. The malonyl-CoA:ACP transacylase (MAT) domain stretch occupies residues 895 to 1199; the sequence is VFVFTGQGSH…MTHSLQPKTS (305 aa). Catalysis depends on Ser986, which acts as the For acyl/malonyl transferase activity. The tract at residues 1268–1414 is N-terminal hotdog fold; it reads EPLISTCAQY…DPTRSQVEWD (147 aa). The 317-residue stretch at 1268 to 1584 folds into the PKS/mFAS DH domain; sequence EPLISTCAQY…YQELPRATWK (317 aa). Residues 1304-1581 form a product template (PT) domain region; sequence MDGHKMQGIG…DIRYQELPRA (278 aa). The interval 1435-1584 is C-terminal hotdog fold; sequence RGHRMQPEVF…YQELPRATWK (150 aa). The segment at 1613–1639 is disordered; that stretch reads RELQQPSSATVPAQETTIDEPEQQEGE. Polar residues predominate over residues 1615–1628; that stretch reads LQQPSSATVPAQET. One can recognise a Carrier domain in the interval 1641-1718; that stretch reads AAGARLFNAI…DLRKEFRANE (78 aa). Residue Ser1678 is modified to O-(pantetheine 4'-phosphoryl)serine. Residues 1721–1784 form a disordered region; sequence VENPRFSATP…EQKRPVKIDD (64 aa). Positions 1727 to 1757 are enriched in low complexity; it reads SATPSSAEASIPSSPSSLAHPMSDSASSLSP. The segment covering 1758-1784 has biased composition (basic and acidic residues); sequence SDREEALPLERQSMTKREQKRPVKIDD. The segment at 1812-2057 is thioesterase (TE) domain; the sequence is ADGTGTIATY…LSVAGDHLDL (246 aa). The active-site For thioesterase activity is His2064.

Its pathway is mycotoxin biosynthesis. Its function is as follows. Highly reducing polyketide synthase; part of the gene cluster that mediates the biosynthesis of 10,11-dehydrocurvularin, a prevalent fungal phytotoxin with heat shock response and immune-modulatory activities. The highly reducing polyketide synthase Dhc3 is responsible for biosynthesis up to the tetraketide stage. The non-reducing polyketide synthase Dhc5 then conducts four additional chain extension cycles, producing the unreduced part of the nascent octaketide from C-1 to C-8 in 10,11-dehydrocurvularin. The chain is Non-reducing polyketide synthase Dhc5 from Alternaria cinerariae.